Consider the following 736-residue polypeptide: Elongation factor 2 (736 aa).

One can recognise a tr-type G domain in the interval glutamate 18–arginine 261. GTP-binding positions include alanine 27–threonine 34, aspartate 93–histidine 97, and asparagine 147–aspartate 150. At histidine 602 the chain carries Diphthamide.

Belongs to the TRAFAC class translation factor GTPase superfamily. Classic translation factor GTPase family. EF-G/EF-2 subfamily.

The protein resides in the cytoplasm. Its function is as follows. Catalyzes the GTP-dependent ribosomal translocation step during translation elongation. During this step, the ribosome changes from the pre-translocational (PRE) to the post-translocational (POST) state as the newly formed A-site-bound peptidyl-tRNA and P-site-bound deacylated tRNA move to the P and E sites, respectively. Catalyzes the coordinated movement of the two tRNA molecules, the mRNA and conformational changes in the ribosome. The polypeptide is Elongation factor 2 (Staphylothermus marinus (strain ATCC 43588 / DSM 3639 / JCM 9404 / F1)).